The primary structure comprises 368 residues: Flagellar P-ring protein (368 aa).

A signal peptide spans 1–22; the sequence is MLIPLARAVLALELLGAGAAHA.

Belongs to the FlgI family. In terms of assembly, the basal body constitutes a major portion of the flagellar organelle and consists of four rings (L,P,S, and M) mounted on a central rod.

The protein localises to the periplasm. The protein resides in the bacterial flagellum basal body. In terms of biological role, assembles around the rod to form the L-ring and probably protects the motor/basal body from shearing forces during rotation. The protein is Flagellar P-ring protein of Bordetella pertussis (strain Tohama I / ATCC BAA-589 / NCTC 13251).